The following is a 215-amino-acid chain: Rod-determining factor A (215 aa).

Involved in cell-shape determination. Required for the formation of rods and wild-type-like motility. This chain is Rod-determining factor A, found in Haloferax volcanii (strain ATCC 29605 / DSM 3757 / JCM 8879 / NBRC 14742 / NCIMB 2012 / VKM B-1768 / DS2) (Halobacterium volcanii).